Reading from the N-terminus, the 261-residue chain is Carnitinyl-CoA dehydratase (261 aa).

Catalysis depends on Glu-111, which acts as the Nucleophile. Catalysis depends on Glu-131, which acts as the Proton acceptor.

This sequence belongs to the enoyl-CoA hydratase/isomerase family.

It carries out the reaction (R)-carnitinyl-CoA = crotonobetainyl-CoA + H2O. It participates in amine and polyamine metabolism; carnitine metabolism. Functionally, catalyzes the reversible dehydration of L-carnitinyl-CoA to crotonobetainyl-CoA. This is Carnitinyl-CoA dehydratase from Salmonella typhimurium (strain LT2 / SGSC1412 / ATCC 700720).